A 275-amino-acid polypeptide reads, in one-letter code: Bifunctional protein FolD (275 aa).

Residues 161–163, serine 186, and threonine 227 contribute to the NADP(+) site; that span reads GRS.

The protein belongs to the tetrahydrofolate dehydrogenase/cyclohydrolase family. As to quaternary structure, homodimer.

It catalyses the reaction (6R)-5,10-methylene-5,6,7,8-tetrahydrofolate + NADP(+) = (6R)-5,10-methenyltetrahydrofolate + NADPH. The catalysed reaction is (6R)-5,10-methenyltetrahydrofolate + H2O = (6R)-10-formyltetrahydrofolate + H(+). It functions in the pathway one-carbon metabolism; tetrahydrofolate interconversion. In terms of biological role, catalyzes the oxidation of 5,10-methylenetetrahydrofolate to 5,10-methenyltetrahydrofolate and then the hydrolysis of 5,10-methenyltetrahydrofolate to 10-formyltetrahydrofolate. The chain is Bifunctional protein FolD from Parafrankia sp. (strain EAN1pec).